A 469-amino-acid polypeptide reads, in one-letter code: ATP synthase subunit beta (469 aa).

157-164 (GGAGVGKT) lines the ATP pocket.

It belongs to the ATPase alpha/beta chains family. As to quaternary structure, F-type ATPases have 2 components, CF(1) - the catalytic core - and CF(0) - the membrane proton channel. CF(1) has five subunits: alpha(3), beta(3), gamma(1), delta(1), epsilon(1). CF(0) has three main subunits: a(1), b(2) and c(9-12). The alpha and beta chains form an alternating ring which encloses part of the gamma chain. CF(1) is attached to CF(0) by a central stalk formed by the gamma and epsilon chains, while a peripheral stalk is formed by the delta and b chains.

It is found in the cell membrane. The catalysed reaction is ATP + H2O + 4 H(+)(in) = ADP + phosphate + 5 H(+)(out). Produces ATP from ADP in the presence of a proton gradient across the membrane. The catalytic sites are hosted primarily by the beta subunits. The chain is ATP synthase subunit beta from Brevibacillus brevis (strain 47 / JCM 6285 / NBRC 100599).